The following is an 828-amino-acid chain: G-type lectin S-receptor-like serine/threonine-protein kinase At2g19130 (828 aa).

An N-terminal signal peptide occupies residues 1–22 (MVSFLTLTSFFFICFFIHGSSA). The 124-residue stretch at 23-146 (VDTISGDFTL…GSSLSANVLW (124 aa)) folds into the Bulb-type lectin domain. Residues 23 to 439 (VDTISGDFTL…GASGKSNNKG (417 aa)) lie on the Extracellular side of the membrane. Asn-85, Asn-113, Asn-203, Asn-234, Asn-240, and Asn-255 each carry an N-linked (GlcNAc...) asparagine glycan. Residues 286–322 (PRQQCQVYRYCGSFGICSDKSEPFCRCPQGFRPMSQK) enclose the EGF-like domain. Intrachain disulfides connect Cys-290–Cys-302, Cys-296–Cys-310, Cys-372–Cys-394, and Cys-376–Cys-382. The PAN domain maps to 341–422 (CSRGDINQFF…EGNIFYLRLA (82 aa)). Residues 440-460 (LIFGAVLGSLGVIVLVLLVVI) traverse the membrane as a helical segment. At 461 to 828 (LILRYRRRKR…KKMTNDNSSA (368 aa)) the chain is on the cytoplasmic side. The Protein kinase domain occupies 493–770 (KNFSDKLGGG…QVVQILEGVL (278 aa)). Residues 499–507 (LGGGGFGSV) and Lys-521 contribute to the ATP site. Ser-527 bears the Phosphoserine mark. The tract at residues 582-600 (VEEKIVLGWKLRFQIALGT) is caM-binding. Residue Asp-619 is the Proton acceptor of the active site. Thr-653 is modified (phosphothreonine). A disordered region spans residues 796 to 828 (ESSSSSSHNSSQNHKHSSSSSSSKKMTNDNSSA). Residues 797–828 (SSSSSSHNSSQNHKHSSSSSSSKKMTNDNSSA) are compositionally biased toward low complexity. Ser-815 is modified (phosphoserine).

The protein belongs to the protein kinase superfamily. Ser/Thr protein kinase family.

The protein resides in the cell membrane. The catalysed reaction is L-seryl-[protein] + ATP = O-phospho-L-seryl-[protein] + ADP + H(+). It catalyses the reaction L-threonyl-[protein] + ATP = O-phospho-L-threonyl-[protein] + ADP + H(+). This is G-type lectin S-receptor-like serine/threonine-protein kinase At2g19130 from Arabidopsis thaliana (Mouse-ear cress).